The chain runs to 294 residues: tRNA dimethylallyltransferase (294 aa).

ATP is bound at residue 10–17; it reads GPTAVGKT. A substrate-binding site is contributed by 12 to 17; it reads TAVGKT. The tract at residues 35–38 is interaction with substrate tRNA; sequence DSQQ.

This sequence belongs to the IPP transferase family. In terms of assembly, monomer. It depends on Mg(2+) as a cofactor.

The catalysed reaction is adenosine(37) in tRNA + dimethylallyl diphosphate = N(6)-dimethylallyladenosine(37) in tRNA + diphosphate. Its function is as follows. Catalyzes the transfer of a dimethylallyl group onto the adenine at position 37 in tRNAs that read codons beginning with uridine, leading to the formation of N6-(dimethylallyl)adenosine (i(6)A). The polypeptide is tRNA dimethylallyltransferase (Streptococcus sanguinis (strain SK36)).